Reading from the N-terminus, the 541-residue chain is Cilia- and flagella-associated protein 97 (541 aa).

A phosphoserine mark is found at S8 and S19. Disordered regions lie at residues 28–47, 93–296, 313–337, 406–430, and 495–514; these read ESNS…GINK, ERKA…KQEN, RCVK…VLDA, LSRQ…PPKL, and HYSP…GLSC. 3 stretches are compositionally biased toward basic and acidic residues: residues 35 to 47, 93 to 107, and 142 to 151; these read KQND…GINK, ERKA…HIEN, and RIPKIVKGED. Residues 152–161 show a composition bias toward acidic residues; it reads DYYTDGEESS. The residue at position 155 (T155) is a Phosphothreonine. Phosphoserine occurs at positions 160 and 161. The segment covering 176 to 201 has biased composition (low complexity); sequence SSNLKKNVSKKYSSSSLSSSSSRSNS. A compositionally biased stretch (basic and acidic residues) spans 207–218; that stretch reads GSDRQRRSESHS. Polar residues-rich tracts occupy residues 219 to 232 and 240 to 250; these read SGKC…SSPK and KSSAQPSSTKQ. S230 is modified (phosphoserine). S258 carries the phosphoserine modification. Over residues 267–277 the composition is skewed to polar residues; the sequence is PLSTPDVSPAQ. Residues 287–296 show a composition bias toward basic and acidic residues; that stretch reads QKVKVKKQEN. Positions 382-459 form a coiled coil; sequence RKNYSFTREE…ALLKRLEAVK (78 aa). The span at 503–513 shows a compositional bias: polar residues; it reads SRTSSATSGLS.

It belongs to the CFAP97 family. Highly expressed in testis with lower levels detected in other tissues including lung, heart and kidney.

The protein is Cilia- and flagella-associated protein 97 of Mus musculus (Mouse).